We begin with the raw amino-acid sequence, 90 residues long: Bombyxin G-1 (90 aa).

An N-terminal signal peptide occupies residues 1 to 19; sequence MKLIIFVVFCITIYGSTSG. Intrachain disulfides connect C28–C77, C40–C90, and C76–C81. The propeptide at 49–67 is c peptide like; that stretch reads NTQYEGYHWPLLAYSEERI.

The protein belongs to the insulin family. As to quaternary structure, heterodimer of a B chain and an A chain linked by two disulfide bonds.

The protein localises to the secreted. This Bombyx mori (Silk moth) protein is Bombyxin G-1 (BBXG1).